Consider the following 427-residue polypeptide: Serine hydroxymethyltransferase (427 aa).

Residues Leu-122 and 126–128 (GHL) each bind (6S)-5,6,7,8-tetrahydrofolate. An N6-(pyridoxal phosphate)lysine modification is found at Lys-231. Residues Glu-247 and 355–357 (SPF) each bind (6S)-5,6,7,8-tetrahydrofolate.

This sequence belongs to the SHMT family. In terms of assembly, homodimer. Requires pyridoxal 5'-phosphate as cofactor.

It localises to the cytoplasm. The enzyme catalyses (6R)-5,10-methylene-5,6,7,8-tetrahydrofolate + glycine + H2O = (6S)-5,6,7,8-tetrahydrofolate + L-serine. It functions in the pathway one-carbon metabolism; tetrahydrofolate interconversion. The protein operates within amino-acid biosynthesis; glycine biosynthesis; glycine from L-serine: step 1/1. In terms of biological role, catalyzes the reversible interconversion of serine and glycine with tetrahydrofolate (THF) serving as the one-carbon carrier. This reaction serves as the major source of one-carbon groups required for the biosynthesis of purines, thymidylate, methionine, and other important biomolecules. Also exhibits THF-independent aldolase activity toward beta-hydroxyamino acids, producing glycine and aldehydes, via a retro-aldol mechanism. This Synechocystis sp. (strain ATCC 27184 / PCC 6803 / Kazusa) protein is Serine hydroxymethyltransferase.